The following is a 154-amino-acid chain: Large ribosomal subunit protein uL13 (154 aa).

The protein belongs to the universal ribosomal protein uL13 family. As to quaternary structure, part of the 50S ribosomal subunit.

Functionally, this protein is one of the early assembly proteins of the 50S ribosomal subunit, although it is not seen to bind rRNA by itself. It is important during the early stages of 50S assembly. In Rhizobium etli (strain ATCC 51251 / DSM 11541 / JCM 21823 / NBRC 15573 / CFN 42), this protein is Large ribosomal subunit protein uL13.